Reading from the N-terminus, the 842-residue chain is Envelope glycoprotein gp160 (842 aa).

The signal sequence occupies residues 1–23 (MGMKSGWLLFYLLVSLIKVIGSE). Over 24 to 663 (QHWVTVYYGV…ITKWLWYIKI (640 aa)) the chain is Extracellular. Cys-45 and Cys-65 are joined by a disulfide. N-linked (GlcNAc...) asparagine; by host glycans are attached at residues Asn-79, Asn-123, Asn-131, Asn-134, Asn-149, Asn-153, Asn-181, Asn-190, Asn-225, Asn-229, Asn-234, Asn-255, Asn-267, Asn-278, Asn-284, Asn-290, Asn-320, Asn-331, and Asn-345. 5 cysteine pairs are disulfide-bonded: Cys-110–Cys-198, Cys-117–Cys-189, Cys-122–Cys-150, Cys-211–Cys-240, and Cys-221–Cys-232. The segment at 122–149 (CNDSYGEERNNTNMTTREPDIGYKQMKN) is V1. Residues 150-189 (CSFNATTELTDKKKQVYSLFYVEDVVPINAYNKTYRLINC) form a V2 region. The tract at residues 285–318 (CTRPGNNTGGQVQIGPAMTFYNIEKIVGDIRQAY) is V3. A disulfide bond links Cys-285 and Cys-319. The segment at 353–363 (RNEGDLEVTHL) is CD4-binding loop. 2 cysteine pairs are disulfide-bonded: Cys-367–Cys-423 and Cys-374–Cys-396. The interval 374–396 (CNTSKLFNEELLNETGEPITLPC) is V4. Asn-375, Asn-386, Asn-422, and Asn-426 each carry an N-linked (GlcNAc...) asparagine; by host glycan. V5 stretches follow at residues 439 to 448 (DTKETIVYPS) and 441 to 448 (KETIVYPS). A fusion peptide region spans residues 489–510 (AAFGLGALFLGFLGAAGSTMGA). The immunosuppression stretch occupies residues 552 to 570 (KQLQAKVLAIERYLRDQQI). Cys-576 and Cys-582 are oxidised to a cystine. N-linked (GlcNAc...) asparagine; by host glycosylation is found at Asn-589, Asn-594, Asn-595, Asn-604, and Asn-616. Residues 612–646 (EKVRNYSGVIFGLIEQAQEQQNTNEKSLLELDQWD) are a coiled coil. The segment at 641–662 (ELDQWDSLWSWFGITKWLWYIK) is MPER; binding to GalCer. A helical transmembrane segment spans residues 664 to 684 (AIMIVAGIVGIRIISIVITII). The Cytoplasmic segment spans residues 685–842 (ARVRQGYSPL…IRQGLERALI (158 aa)). The short motif at 691 to 694 (YSPL) is the YXXL motif; contains endocytosis signal element.

The protein belongs to the HIV-1 env protein family. The mature envelope protein (Env) consists of a homotrimer of non-covalently associated gp120-gp41 heterodimers. The resulting complex protrudes from the virus surface as a spike. There seems to be as few as 10 spikes on the average virion. Interacts with host CD4, CCR5 and CXCR4. Gp120 also interacts with the C-type lectins CD209/DC-SIGN and CLEC4M/DC-SIGNR (collectively referred to as DC-SIGN(R)). Gp120 and gp41 interact with GalCer. Gp120 interacts with host ITGA4/ITGB7 complex; on CD4+ T-cells, this interaction results in rapid activation of integrin ITGAL/LFA-1, which facilitates efficient cell-to-cell spreading of HIV-1. Gp120 interacts with cell-associated heparan sulfate; this interaction increases virus infectivity on permissive cells and may be involved in infection of CD4- cells. As to quaternary structure, the mature envelope protein (Env) consists of a homotrimer of non-covalently associated gp120-gp41 heterodimers. The resulting complex protrudes from the virus surface as a spike. There seems to be as few as 10 spikes on the average virion. In terms of processing, highly glycosylated by host. The high number of glycan on the protein is reffered to as 'glycan shield' because it contributes to hide protein sequence from adaptive immune system. Palmitoylation of the transmembrane protein and of Env polyprotein (prior to its proteolytic cleavage) is essential for their association with host cell membrane lipid rafts. Palmitoylation is therefore required for envelope trafficking to classical lipid rafts, but not for viral replication. Post-translationally, specific enzymatic cleavages in vivo yield mature proteins. Envelope glycoproteins are synthesized as an inactive precursor that is heavily N-glycosylated and processed likely by host cell furin in the Golgi to yield the mature SU and TM proteins. The cleavage site between SU and TM requires the minimal sequence [KR]-X-[KR]-R. About 2 of the 9 disulfide bonds of gp41 are reduced by P4HB/PDI, following binding to CD4 receptor.

The protein localises to the virion membrane. The protein resides in the host cell membrane. It localises to the host endosome membrane. Functionally, oligomerizes in the host endoplasmic reticulum into predominantly trimers. In a second time, gp160 transits in the host Golgi, where glycosylation is completed. The precursor is then proteolytically cleaved in the trans-Golgi and thereby activated by cellular furin or furin-like proteases to produce gp120 and gp41. In terms of biological role, attaches the virus to the host lymphoid cell by binding to the primary receptor CD4. This interaction induces a structural rearrangement creating a high affinity binding site for a chemokine coreceptor like CXCR4 and/or CCR5. Acts as a ligand for CD209/DC-SIGN and CLEC4M/DC-SIGNR, which are respectively found on dendritic cells (DCs), and on endothelial cells of liver sinusoids and lymph node sinuses. These interactions allow capture of viral particles at mucosal surfaces by these cells and subsequent transmission to permissive cells. HIV subverts the migration properties of dendritic cells to gain access to CD4+ T-cells in lymph nodes. Virus transmission to permissive T-cells occurs either in trans (without DCs infection, through viral capture and transmission), or in cis (following DCs productive infection, through the usual CD4-gp120 interaction), thereby inducing a robust infection. In trans infection, bound virions remain infectious over days and it is proposed that they are not degraded, but protected in non-lysosomal acidic organelles within the DCs close to the cell membrane thus contributing to the viral infectious potential during DCs' migration from the periphery to the lymphoid tissues. On arrival at lymphoid tissues, intact virions recycle back to DCs' cell surface allowing virus transmission to CD4+ T-cells. Its function is as follows. Acts as a class I viral fusion protein. Under the current model, the protein has at least 3 conformational states: pre-fusion native state, pre-hairpin intermediate state, and post-fusion hairpin state. During fusion of viral and target intracellular membranes, the coiled coil regions (heptad repeats) assume a trimer-of-hairpins structure, positioning the fusion peptide in close proximity to the C-terminal region of the ectodomain. The formation of this structure appears to drive apposition and subsequent fusion of viral and target cell membranes. Complete fusion occurs in host cell endosomes and is dynamin-dependent, however some lipid transfer might occur at the plasma membrane. The virus undergoes clathrin-dependent internalization long before endosomal fusion, thus minimizing the surface exposure of conserved viral epitopes during fusion and reducing the efficacy of inhibitors targeting these epitopes. Membranes fusion leads to delivery of the nucleocapsid into the cytoplasm. The protein is Envelope glycoprotein gp160 of Human immunodeficiency virus type 1 group N (isolate YBF30) (HIV-1).